Reading from the N-terminus, the 276-residue chain is Large ribosomal subunit protein uL2 (276 aa).

A disordered region spans residues A224 to G276. The segment covering K254–K270 has biased composition (basic residues).

Belongs to the universal ribosomal protein uL2 family. In terms of assembly, part of the 50S ribosomal subunit. Forms a bridge to the 30S subunit in the 70S ribosome.

Its function is as follows. One of the primary rRNA binding proteins. Required for association of the 30S and 50S subunits to form the 70S ribosome, for tRNA binding and peptide bond formation. It has been suggested to have peptidyltransferase activity; this is somewhat controversial. Makes several contacts with the 16S rRNA in the 70S ribosome. This chain is Large ribosomal subunit protein uL2, found in Ehrlichia canis (strain Jake).